The primary structure comprises 506 residues: Histidine ammonia-lyase (506 aa).

A cross-link (5-imidazolinone (Ala-Gly)) is located at residues 143 to 145 (ASG). Position 144 is a 2,3-didehydroalanine (Ser) (serine 144).

This sequence belongs to the PAL/histidase family. Contains an active site 4-methylidene-imidazol-5-one (MIO), which is formed autocatalytically by cyclization and dehydration of residues Ala-Ser-Gly.

It localises to the cytoplasm. The enzyme catalyses L-histidine = trans-urocanate + NH4(+). It participates in amino-acid degradation; L-histidine degradation into L-glutamate; N-formimidoyl-L-glutamate from L-histidine: step 1/3. The sequence is that of Histidine ammonia-lyase from Citrobacter koseri (strain ATCC BAA-895 / CDC 4225-83 / SGSC4696).